Here is a 90-residue protein sequence, read N- to C-terminus: MKYFTLFMISYIFISIFVFSHIHDVEARNRICRTSEKYYREFCGHAGNDDCLSKSTKKPKPFKCVCHDNRSQNITSINDRYNNCICTFYC.

The signal sequence occupies residues Met-1–Ala-27. 4 disulfide bridges follow: Cys-32–Cys-90, Cys-43–Cys-66, Cys-51–Cys-84, and Cys-64–Cys-86.

It belongs to the DEFL family.

The protein resides in the secreted. This is Putative defensin-like protein 168 from Arabidopsis thaliana (Mouse-ear cress).